The chain runs to 275 residues: uncharacterized protein (275 aa).

The protein resides in the virion. This is an uncharacterized protein from Acanthamoeba polyphaga (Amoeba).